A 308-amino-acid chain; its full sequence is GATA transcription factor 10 (308 aa).

The segment at 214–268 adopts a GATA-type zinc-finger fold; it reads DGIVRICTHCETITTPQWRQGPSGPKTLCNACGVRFKSGRLVPEYRPASSPTFIP.

The protein belongs to the type IV zinc-finger family. Class A subfamily.

It is found in the nucleus. Its function is as follows. Transcriptional activator that specifically binds 5'-GATA-3' or 5'-GAT-3' motifs within gene promoters. May be involved in the regulation of some light-responsive genes. The protein is GATA transcription factor 10 (GATA10) of Arabidopsis thaliana (Mouse-ear cress).